We begin with the raw amino-acid sequence, 367 residues long: MIQFQPVLGSLKSYEAGKPIELVVREFGIDPDQIIKLGSNENPFGCAQPVVEAVQKAASKMPYYPDDSYLELKTALASKFDLTPDRIILGNGSDQVLDFACRCVLGPGDSILINRITFAMYRIYALQCGAKVHSTETVLHDLNAFLDLAKSIRPKIIFLCTPSNPIGDALFKSDVYDFLRQIPSNTLVVIDAAYMEFGKKKDSNTFISAKEVTDLFPNVFYTGTFSKAYGLGGMRIGYGIGSKELISNLYKMRPPFNVANLSALAATEALKNESHVESYLDNNLKEMKRYEKFAAEQSVEFIDSYANFITFFARKRGKSSTEISQSLLKQGIILRNLRSYDLNAIRITIGKPQQNDRVLTALNQEFS.

K227 carries the post-translational modification N6-(pyridoxal phosphate)lysine.

The protein belongs to the class-II pyridoxal-phosphate-dependent aminotransferase family. Histidinol-phosphate aminotransferase subfamily. Homodimer. The cofactor is pyridoxal 5'-phosphate.

It catalyses the reaction L-histidinol phosphate + 2-oxoglutarate = 3-(imidazol-4-yl)-2-oxopropyl phosphate + L-glutamate. It participates in amino-acid biosynthesis; L-histidine biosynthesis; L-histidine from 5-phospho-alpha-D-ribose 1-diphosphate: step 7/9. This is Histidinol-phosphate aminotransferase from Leptospira borgpetersenii serovar Hardjo-bovis (strain JB197).